Reading from the N-terminus, the 425-residue chain is Tyrosine--tRNA ligase (425 aa).

Tyr37 contributes to the L-tyrosine binding site. The 'HIGH' region signature appears at 42–51 (PTADSLHLGH). The L-tyrosine site is built by Tyr175 and Gln179. The 'KMSKS' region motif lies at 235–239 (KFGKT). Lys238 lines the ATP pocket. In terms of domain architecture, S4 RNA-binding spans 357 to 414 (ADLQQALVSAELVPSRGQARTMISSNAVTINGEKQANPEYIFSASDRLFDRYTLLRRG).

Belongs to the class-I aminoacyl-tRNA synthetase family. TyrS type 1 subfamily. Homodimer.

It localises to the cytoplasm. The enzyme catalyses tRNA(Tyr) + L-tyrosine + ATP = L-tyrosyl-tRNA(Tyr) + AMP + diphosphate + H(+). In terms of biological role, catalyzes the attachment of tyrosine to tRNA(Tyr) in a two-step reaction: tyrosine is first activated by ATP to form Tyr-AMP and then transferred to the acceptor end of tRNA(Tyr). The sequence is that of Tyrosine--tRNA ligase from Pectobacterium atrosepticum (strain SCRI 1043 / ATCC BAA-672) (Erwinia carotovora subsp. atroseptica).